The sequence spans 33 residues: Brevinin-2PTd (33 aa).

Residues C27 and C33 are joined by a disulfide bond.

As to expression, expressed by the skin glands.

It is found in the secreted. Has antibacterial activity against the Gram-positive bacterium S.aureus ATCC 25923 and the Gram-negative bacterium E.coli ATCC 25726. This Pulchrana picturata (Malaysian fire frog) protein is Brevinin-2PTd.